A 224-amino-acid polypeptide reads, in one-letter code: Transcriptional regulatory protein TctD (224 aa).

A Response regulatory domain is found at Arg2–Leu116. Asp51 bears the 4-aspartylphosphate mark. Residues Gly121–Arg219 constitute a DNA-binding region (ompR/PhoB-type).

Transcriptional activator of the tctI tricarboxylate transport system operon. The sequence is that of Transcriptional regulatory protein TctD (tctD) from Salmonella typhimurium (strain SL1344).